The primary structure comprises 264 residues: Thymidylate synthase (264 aa).

DUMP is bound at residue Arg-21. His-51 is a (6R)-5,10-methylene-5,6,7,8-tetrahydrofolate binding site. 126–127 (RR) lines the dUMP pocket. Cys-146 acts as the Nucleophile in catalysis. DUMP-binding positions include 166-169 (RSAD), Asn-177, and 207-209 (HLY). Residue Asp-169 participates in (6R)-5,10-methylene-5,6,7,8-tetrahydrofolate binding. Position 263 (Ser-263) interacts with (6R)-5,10-methylene-5,6,7,8-tetrahydrofolate.

Belongs to the thymidylate synthase family. Bacterial-type ThyA subfamily. As to quaternary structure, homodimer.

The protein localises to the cytoplasm. It carries out the reaction dUMP + (6R)-5,10-methylene-5,6,7,8-tetrahydrofolate = 7,8-dihydrofolate + dTMP. The protein operates within pyrimidine metabolism; dTTP biosynthesis. Functionally, catalyzes the reductive methylation of 2'-deoxyuridine-5'-monophosphate (dUMP) to 2'-deoxythymidine-5'-monophosphate (dTMP) while utilizing 5,10-methylenetetrahydrofolate (mTHF) as the methyl donor and reductant in the reaction, yielding dihydrofolate (DHF) as a by-product. This enzymatic reaction provides an intracellular de novo source of dTMP, an essential precursor for DNA biosynthesis. In Neisseria meningitidis serogroup C / serotype 2a (strain ATCC 700532 / DSM 15464 / FAM18), this protein is Thymidylate synthase.